Here is a 1805-residue protein sequence, read N- to C-terminus: Obscurin-like protein 1 (1805 aa).

At serine 10 the chain carries Phosphoserine. The 89-residue stretch at 12–100 folds into the Ig-like 1 domain; the sequence is PCFLRFPRPV…GEAYAAAAVT (89 aa). Residues 17–19 are interaction with TTN; it reads FPR. An intrachain disulfide couples cysteine 33 to cysteine 84. An interaction with TTN region spans residues 85–94; sequence RARNAAGEAY. Pro residues predominate over residues 104 to 122; the sequence is PPAPEPEPQSSECPPPPPG. A disordered region spans residues 104-131; the sequence is PPAPEPEPQSSECPPPPPGTGEGAPVFL. Ig-like domains lie at 128-225, 240-330, and 339-425; these read PVFL…ALLQ, PPVR…QTLS, and PRLR…ANVT. 3 disulfide bridges follow: cysteine 149/cysteine 209, cysteine 267/cysteine 319, and cysteine 362/cysteine 412. Residues 517–615 enclose the Fibronectin type-III domain; sequence PPGPPVLVEM…FNGSAHLVPT (99 aa). Ig-like domains are found at residues 720 to 800, 804 to 891, 902 to 982, 986 to 1075, 1078 to 1165, 1176 to 1261, 1266 to 1351, 1355 to 1442, 1536 to 1628, and 1702 to 1798; these read PQDK…FSVT, PPVH…FTVT, PNGK…FTIT, PPVR…VTVT, PERI…FNVS, PEAV…FNVQ, PPVK…ARLH, TELL…ARLS, PVTI…REVS, and PAQS…ADTQ. 6 cysteine pairs are disulfide-bonded: cysteine 738–cysteine 788, cysteine 829–cysteine 879, cysteine 920–cysteine 970, cysteine 1011–cysteine 1061, cysteine 1103–cysteine 1153, and cysteine 1195–cysteine 1245. A disulfide bond links cysteine 1558 and cysteine 1608.

In terms of assembly, component of the 3M complex, composed of core components CUL7, CCDC8 and OBSL1. Interacts with CCDC8. Interacts with CUL7; the interaction is direct. Interacts with FBXW8. Interacts (via N-terminal Ig-like domain) with TTN/titin (via C-terminal Ig-like domain); the interaction is direct. In terms of tissue distribution, expressed in granule neurons, with levels decreasing with neuronal maturation.

It is found in the cytoplasm. The protein resides in the perinuclear region. It localises to the golgi apparatus. Its function is as follows. Core component of the 3M complex, a complex required to regulate microtubule dynamics and genome integrity. It is unclear how the 3M complex regulates microtubules, it could act by controlling the level of a microtubule stabilizer. Acts as a regulator of the Cul7-RING(FBXW8) ubiquitin-protein ligase, playing a critical role in the ubiquitin ligase pathway that regulates Golgi morphogenesis and dendrite patterning in brain. Required to localize CUL7 to the Golgi apparatus in neurons. The chain is Obscurin-like protein 1 (Obsl1) from Rattus norvegicus (Rat).